A 949-amino-acid polypeptide reads, in one-letter code: Sensor histidine kinase RcsC (949 aa).

Over 1 to 19 the chain is Cytoplasmic; sequence MKYLASFRTTLKASRYMFR. The helical transmembrane segment at 20 to 41 threads the bilayer; sequence ALALVLWLLIAFSSVFYIVNAL. The Periplasmic portion of the chain corresponds to 42–313; that stretch reads HQRESEIRQE…PVDKVLERIR (272 aa). The helical transmembrane segment at 314 to 335 threads the bilayer; it reads MVILNAILLNVLAGAALFTLAR. The Cytoplasmic segment spans residues 336-949; the sequence is MYERRIFIPA…AERVRKSRES (614 aa). The 69-residue stretch at 357–425 folds into the PAS domain; it reads QFNRKIVASA…VLTSNNTNLQ (69 aa). A Histidine kinase domain is found at 476 to 692; that stretch reads TVSHELRTPL…QFTVRIPLYG (217 aa). Phosphohistidine; by autocatalysis is present on His479. Positions 705 to 805 constitute an ABL domain; that stretch reads SGKRCWLAVR…ARIYLIEMES (101 aa). The 115-residue stretch at 826 to 940 folds into the Response regulatory domain; that stretch reads MILVVDDHPI…VIKQTLTVYA (115 aa). Asp875 bears the 4-aspartylphosphate mark.

This sequence belongs to the RcsC family. Interacts with RcsD. Autophosphorylated. Activation probably requires a transfer of a phosphate group from a His in the transmitter domain to an Asp in the receiver domain.

It is found in the cell inner membrane. It catalyses the reaction ATP + protein L-histidine = ADP + protein N-phospho-L-histidine.. Functionally, component of the Rcs signaling system, which controls transcription of numerous genes. RcsC functions as a membrane-associated protein kinase that phosphorylates RcsD in response to environmental signals. The phosphoryl group is then transferred to the response regulator RcsB. Involved in regulation of K30 capsular polysaccharide synthesis. This Escherichia coli protein is Sensor histidine kinase RcsC.